The sequence spans 306 residues: Anamorsin (306 aa).

The segment at 6 to 172 (IAPGQRVAVI…KPNFEVGSSS (167 aa)) is N-terminal SAM-like domain. The interval 173 to 224 (QLKLSFAKKTSPSGKPSVDPATAKLWTLSASDMNDEEMDLLDSDELLDSEDL) is linker. Positions 237, 246, 249, and 251 each coordinate [2Fe-2S] cluster. The segment at 237–251 (CKEKGKKKACKNCTC) is fe-S binding site A. Residues Cys-270, Cys-273, Cys-281, and Cys-284 each coordinate [4Fe-4S] cluster. Short sequence motifs (cx2C motif) lie at residues 270-273 (CGNC) and 281-284 (CASC). The tract at residues 270–284 (CGNCYLGDAFRCASC) is fe-S binding site B.

The protein belongs to the anamorsin family. In terms of assembly, monomer. Interacts with NDOR1. Interacts with CHCHD4. It depends on [2Fe-2S] cluster as a cofactor. [4Fe-4S] cluster is required as a cofactor.

It is found in the cytoplasm. It localises to the nucleus. The protein resides in the mitochondrion intermembrane space. Functionally, component of the cytosolic iron-sulfur (Fe-S) protein assembly (CIA) machinery required for the maturation of extramitochondrial Fe-S proteins. Part of an electron transfer chain functioning in an early step of cytosolic Fe-S biogenesis, facilitating the de novo assembly of a [4Fe-4S] cluster on the scaffold complex NUBP1-NUBP2. Electrons are transferred to CIAPIN1 from NADPH via the FAD- and FMN-containing protein NDOR1. NDOR1-CIAPIN1 are also required for the assembly of the diferric tyrosyl radical cofactor of ribonucleotide reductase (RNR), probably by providing electrons for reduction during radical cofactor maturation in the catalytic small subunit. Has anti-apoptotic effects in the cell. Involved in negative control of cell death upon cytokine withdrawal. Promotes development of hematopoietic cells. This Gallus gallus (Chicken) protein is Anamorsin.